The primary structure comprises 132 residues: D-ribose pyranase (132 aa).

H20 serves as the catalytic Proton donor. Substrate is bound by residues D28, H99, and 121–123; that span reads YSN.

It belongs to the RbsD / FucU family. RbsD subfamily. Homodecamer.

It localises to the cytoplasm. The catalysed reaction is beta-D-ribopyranose = beta-D-ribofuranose. Its pathway is carbohydrate metabolism; D-ribose degradation; D-ribose 5-phosphate from beta-D-ribopyranose: step 1/2. Catalyzes the interconversion of beta-pyran and beta-furan forms of D-ribose. The protein is D-ribose pyranase of Pseudomonas putida (strain GB-1).